The following is a 243-amino-acid chain: R-spondin-2 (243 aa).

A signal peptide spans 1-23 (MRFCLFSFALIILNCMDYSQCQG). 11 cysteine pairs are disulfide-bonded: Cys-40–Cys-46, Cys-43–Cys-52, Cys-55–Cys-74, Cys-78–Cys-93, Cys-96–Cys-104, Cys-101–Cys-110, Cys-113–Cys-124, Cys-128–Cys-141, Cys-145–Cys-187, Cys-156–Cys-163, and Cys-196–Cys-203. The stretch at 90 to 134 (MNRCARCRIENCDSCFSKDFCTKCKVGFYLHRGRCFDECPDGFAP) is one FU repeat. In terms of domain architecture, TSP type-1 spans 144-204 (GCEVGHWSEW…RCKMAMRHCP (61 aa)). N-linked (GlcNAc...) asparagine glycosylation is present at Asn-160. Residues 204 to 224 (PGGKRTPKAKEKRNKKKRRKL) show a composition bias toward basic residues. The disordered stretch occupies residues 204–243 (PGGKRTPKAKEKRNKKKRRKLIERAQEQHSVFLATDRVNQ).

It belongs to the R-spondin family. As to quaternary structure, interacts with WNT1. Binds heparin. Interacts with LGR4, LGR5 and LGR6.

Its subcellular location is the secreted. Its function is as follows. Activator of the canonical Wnt signaling pathway by acting as a ligand for LGR4-6 receptors. Upon binding to LGR4-6 (LGR4, LGR5 or LGR6), LGR4-6 associate with phosphorylated LRP6 and frizzled receptors that are activated by extracellular Wnt receptors, triggering the canonical Wnt signaling pathway to increase expression of target genes. Also regulates the canonical Wnt/beta-catenin-dependent pathway and non-canonical Wnt signaling by acting as an inhibitor of ZNRF3, an important regulator of the Wnt signaling pathway. Probably also acts as a ligand for frizzled and LRP receptors. During embryonic development, plays a crucial role in limb specification, amplifying the Wnt signaling pathway independently of LGR4-6 receptors, possibly by acting as a direct antagonistic ligand to RNF43 and ZNRF3, hence governing the number of limbs an embryo should form. In Mus musculus (Mouse), this protein is R-spondin-2 (Rspo2).